The chain runs to 195 residues: Peroxiredoxin bcp1 (195 aa).

The 123-residue stretch at 46-168 (IQVGDVIPDI…SHWIFEKGTG (123 aa)) folds into the Thioredoxin domain. Residue cysteine 89 is the Cysteine sulfenic acid (-SOH) intermediate of the active site. A disulfide bridge links cysteine 89 with cysteine 94.

It belongs to the peroxiredoxin family. BCP/PrxQ subfamily. Monomer. Post-translationally, the active site is a conserved redox-active cysteine residue, the peroxidatic cysteine (C(P)), which makes the nucleophilic attack on the peroxide substrate. The peroxide oxidizes the C(P)-SH to cysteine sulfenic acid (C(P)-SOH), which then reacts with another cysteine residue, the resolving cysteine (C(R)), to form a disulfide bridge. The disulfide is subsequently reduced by an appropriate electron donor to complete the catalytic cycle. In this atypical 2-Cys peroxiredoxin, C(R) is present in the same subunit to form an intramolecular disulfide. The disulfide is subsequently reduced by thioredoxin.

It is found in the cytoplasm. Its subcellular location is the nucleus. The catalysed reaction is a hydroperoxide + [thioredoxin]-dithiol = an alcohol + [thioredoxin]-disulfide + H2O. In terms of biological role, thiol-specific peroxidase that catalyzes the reduction of hydrogen peroxide and organic hydroperoxides to water and alcohols, respectively. Plays a role in cell protection against oxidative stress by detoxifying peroxides and as sensor of hydrogen peroxide-mediated signaling events. Acts as a scavenger of H(2)O(2). This chain is Peroxiredoxin bcp1 (bcp1), found in Schizosaccharomyces pombe (strain 972 / ATCC 24843) (Fission yeast).